A 122-amino-acid polypeptide reads, in one-letter code: Large ribosomal subunit protein bL12 (122 aa).

The segment at 94–122 is disordered; the sequence is GNVKEGLSKEDAEEMKEKLEEAGATVELK. The span at 99–114 shows a compositional bias: basic and acidic residues; the sequence is GLSKEDAEEMKEKLEE.

The protein belongs to the bacterial ribosomal protein bL12 family. As to quaternary structure, homodimer. Part of the ribosomal stalk of the 50S ribosomal subunit. Forms a multimeric L10(L12)X complex, where L10 forms an elongated spine to which 2 to 4 L12 dimers bind in a sequential fashion. Binds GTP-bound translation factors.

In terms of biological role, forms part of the ribosomal stalk which helps the ribosome interact with GTP-bound translation factors. Is thus essential for accurate translation. The chain is Large ribosomal subunit protein bL12 from Halanaerobium praevalens.